Reading from the N-terminus, the 491-residue chain is Glutamyl-tRNA(Gln) amidotransferase subunit A (491 aa).

Catalysis depends on charge relay system residues K77 and S152. The active-site Acyl-ester intermediate is S176.

This sequence belongs to the amidase family. GatA subfamily. Heterotrimer of A, B and C subunits.

The catalysed reaction is L-glutamyl-tRNA(Gln) + L-glutamine + ATP + H2O = L-glutaminyl-tRNA(Gln) + L-glutamate + ADP + phosphate + H(+). Its function is as follows. Allows the formation of correctly charged Gln-tRNA(Gln) through the transamidation of misacylated Glu-tRNA(Gln) in organisms which lack glutaminyl-tRNA synthetase. The reaction takes place in the presence of glutamine and ATP through an activated gamma-phospho-Glu-tRNA(Gln). The polypeptide is Glutamyl-tRNA(Gln) amidotransferase subunit A (Chlamydia felis (strain Fe/C-56) (Chlamydophila felis)).